Consider the following 216-residue polypeptide: Ribosomal RNA large subunit methyltransferase E (216 aa).

Gly-60, Trp-62, Asp-80, Asp-96, and Asp-121 together coordinate S-adenosyl-L-methionine. Catalysis depends on Lys-161, which acts as the Proton acceptor.

This sequence belongs to the class I-like SAM-binding methyltransferase superfamily. RNA methyltransferase RlmE family.

The protein localises to the cytoplasm. It catalyses the reaction uridine(2552) in 23S rRNA + S-adenosyl-L-methionine = 2'-O-methyluridine(2552) in 23S rRNA + S-adenosyl-L-homocysteine + H(+). Specifically methylates the uridine in position 2552 of 23S rRNA at the 2'-O position of the ribose in the fully assembled 50S ribosomal subunit. The protein is Ribosomal RNA large subunit methyltransferase E of Pseudomonas syringae pv. syringae (strain B728a).